The chain runs to 134 residues: ATP synthase epsilon chain (134 aa).

Belongs to the ATPase epsilon chain family. F-type ATPases have 2 components, CF(1) - the catalytic core - and CF(0) - the membrane proton channel. CF(1) has five subunits: alpha(3), beta(3), gamma(1), delta(1), epsilon(1). CF(0) has three main subunits: a, b and c.

The protein resides in the cell inner membrane. In terms of biological role, produces ATP from ADP in the presence of a proton gradient across the membrane. This is ATP synthase epsilon chain from Rhodospirillum rubrum (strain ATCC 11170 / ATH 1.1.1 / DSM 467 / LMG 4362 / NCIMB 8255 / S1).